We begin with the raw amino-acid sequence, 587 residues long: Ankyrin repeat and SOCS box protein 14 (587 aa).

ANK repeat units lie at residues 81 to 110, 116 to 145, 149 to 178, 182 to 211, 215 to 244, 248 to 277, 281 to 310, 313 to 342, 355 to 384, 385 to 414, and 416 to 449; these read NGWL…PSTW, NGET…NPNA, EGNS…DVNL, NERT…YPDA, YGFT…DVHS, DSSS…DANI, SGHL…IAAI, SGIS…DVNF, QRKS…LPNQ, DPVN…NVNY, and CRVN…DTER. One can recognise an SOCS box domain in the interval 521-576; sequence WPEIHFILANPRSLQHLCRLKIRKCMGRLRLRCPVFMSFLPLPNLLKAYVLYKEYD.

This sequence belongs to the ankyrin SOCS box (ASB) family. As to quaternary structure, interacts with MAPRE2; this interaction promotes MAPRE2 degradation.

The protein operates within protein modification; protein ubiquitination. Functionally, may be a substrate-recognition component of a SCF-like ECS (Elongin-Cullin-SOCS-box protein) E3 ubiquitin-protein ligase complex which mediates the ubiquitination and subsequent proteasomal degradation of target proteins. Plays a role in the inhibition of cardiomyocyte nuclear proliferation by mediating the ubiquitination and degradation of MAPRE2. This is Ankyrin repeat and SOCS box protein 14 (Asb14) from Mus musculus (Mouse).